The following is a 179-amino-acid chain: Large ribosomal subunit protein uL5 (179 aa).

It belongs to the universal ribosomal protein uL5 family. As to quaternary structure, part of the 50S ribosomal subunit; part of the 5S rRNA/L5/L18/L25 subcomplex. Contacts the 5S rRNA and the P site tRNA. Forms a bridge to the 30S subunit in the 70S ribosome.

Its function is as follows. This is one of the proteins that bind and probably mediate the attachment of the 5S RNA into the large ribosomal subunit, where it forms part of the central protuberance. In the 70S ribosome it contacts protein S13 of the 30S subunit (bridge B1b), connecting the 2 subunits; this bridge is implicated in subunit movement. Contacts the P site tRNA; the 5S rRNA and some of its associated proteins might help stabilize positioning of ribosome-bound tRNAs. This chain is Large ribosomal subunit protein uL5, found in Oceanobacillus iheyensis (strain DSM 14371 / CIP 107618 / JCM 11309 / KCTC 3954 / HTE831).